The sequence spans 218 residues: Mitochondrial import inner membrane translocase subunit TIM17-1 (218 aa).

Transmembrane regions (helical) follow at residues 19 to 36 (VGGA…YHLI), 66 to 82 (FSVW…ALVY), 89 to 105 (PWNS…FLSL), and 116 to 133 (ALVG…GIML).

The protein belongs to the Tim17/Tim22/Tim23 family. As to quaternary structure, component of the TIM17:23 complex at least composed of TIM23, TIM17 and TIM50. The complex interacts with the TIM44 component of the PAM complex. In terms of tissue distribution, expressed in flowers, leaves and cotyledons, and at very low levels in roots.

Its subcellular location is the mitochondrion inner membrane. Its function is as follows. Essential component of the TIM17:23 complex, a complex that mediates the translocation of transit peptide-containing proteins across the mitochondrial inner membrane. Links the inner and outer membranes. The polypeptide is Mitochondrial import inner membrane translocase subunit TIM17-1 (TIM17-1) (Arabidopsis thaliana (Mouse-ear cress)).